We begin with the raw amino-acid sequence, 133 residues long: Profilin (133 aa).

It belongs to the profilin family.

More likely to influence phosphoinositide metabolism than actin assembly. This chain is Profilin, found in Cowpox virus (strain GRI-90 / Grishak) (CPV).